A 339-amino-acid chain; its full sequence is MVIQKNWQELIKPNKLQVSAGDDPKRVATVVAEPLERGFGTTLGNSLRRVLLSSLQGAAVTSVQIDGVLHEFSSIPGVREDVTDIVLNIKTIAIRSQTDQPKRMTLRKTGPGLVTAGDIGAVGDIQILNPDLVICTLDDGAEIRMEFTVATGKGYVPADRNRPEDAPIGLIPVDALFSPVTKVSYRVETTREGQDLDKDKLTMTVETNGAVSPEDALAYAARIIQDQLQVFVNFEEPRKEEAAPLAPQLPFNPALLKKVDELELSVRSANCLKNDNIVYIGDLIQKSEGEMLRTPNFGRKSLNEIKEVLAGMGLHLGMDVPGWPPENIEDLAKRFEEHY.

Residues 1–235 (MVIQKNWQEL…DQLQVFVNFE (235 aa)) form an alpha N-terminal domain (alpha-NTD) region. Positions 251-339 (FNPALLKKVD…DLAKRFEEHY (89 aa)) are alpha C-terminal domain (alpha-CTD).

It belongs to the RNA polymerase alpha chain family. In terms of assembly, homodimer. The RNAP catalytic core consists of 2 alpha, 1 beta, 1 beta' and 1 omega subunit. When a sigma factor is associated with the core the holoenzyme is formed, which can initiate transcription.

It catalyses the reaction RNA(n) + a ribonucleoside 5'-triphosphate = RNA(n+1) + diphosphate. DNA-dependent RNA polymerase catalyzes the transcription of DNA into RNA using the four ribonucleoside triphosphates as substrates. In Methylorubrum populi (strain ATCC BAA-705 / NCIMB 13946 / BJ001) (Methylobacterium populi), this protein is DNA-directed RNA polymerase subunit alpha.